Consider the following 716-residue polypeptide: Macrophage-expressed gene 1 protein (716 aa).

The N-terminal stretch at 1–20 (MNNFRATILFWAVAAWVTSG) is a signal peptide. In terms of domain architecture, MACPF spans 30 to 345 (GVQKCKNALK…TAVKRYYTFN (316 aa)). Cysteines 34 and 70 form a disulfide. 2 beta stranded membrane-spanning segments follow: residues 113 to 120 (YSINTELS) and 127 to 132 (GKFSTE). Asn-168 and Asn-185 each carry an N-linked (GlcNAc...) asparagine glycan. 2 consecutive transmembrane segments (beta stranded) span residues 235–244 (AVTASAGLAF) and 248–256 (VNFKFEENY). A glycan (N-linked (GlcNAc...) asparagine) is linked at Asn-269. An intrachain disulfide couples Cys-350 to Cys-369. N-linked (GlcNAc...) asparagine glycosylation occurs at Asn-375. Disulfide bonds link Cys-385-Cys-397, Cys-435-Cys-449, Cys-439-Cys-445, Cys-534-Cys-572, and Cys-557-Cys-577. A P2 region spans residues 413-656 (PSGYSPVRLL…GDGGGLSGGA (244 aa)). Residues 656–676 (AAAGVTLGVTTILAVVITLAI) traverse the membrane as a helical segment. The interval 693 to 716 (RQSLVPGTAATGDTTYQEQGQSPA) is disordered. The span at 703–716 (TGDTTYQEQGQSPA) shows a compositional bias: polar residues.

This sequence belongs to the MPEG1 family. In terms of assembly, homooligomer; predominantly forms a homooligomeric arc-shaped pore complex instead of complete rings of 16 subunits. In terms of processing, proteolytically processed in two steps to generate the Macrophage-expressed gene 1 protein, processed form: cleaved by trypsin in proximity of the helical transmembrane domain releases the ectodomain into the lysosomal lumen to orient the pore-forming domain toward the endogenous membranes, and processed by the asparagine endopeptidase (LGMN). Proteolytic processing in antigen-containing vesicles is pH-dependent. Monoubiquitinated in response to bacterial infection; ubiquitination is required for vesicular localization and antibacterial activity and can be blocked by bacterial cell cycle inhibiting factor (cif).

It is found in the cytoplasmic vesicle membrane. Its subcellular location is the cytoplasmic vesicle. The protein resides in the phagosome membrane. With respect to regulation, forms arc- and ring-shaped pre-pores on top of the membrane at neutral to slightly acidic pH conditions and converts to pores upon acidification. Undergoes transition from the pre-pore to the pore in a processive clockwise hand-over-hand process. In the pore state, 2 alpha-helical regions refold into transmembrane hairpins (TMH1 and TMH2) in each protomer that form in the ensemble complex giant beta-barrel transmembrane pores. Pore-forming protein involved in both innate and adaptive immunity. Plays a central role in antigen cross-presentation in dendritic cells by forming a pore in antigen-containing compartments, thereby promoting delivery of antigens for cross-presentation. Also involved in innate immune response following bacterial infection; shows antibacterial activity against a wide spectrum of Gram-positive, Gram-negative and acid-fast bacteria. Reduces the viability of the intracytosolic pathogen L.monocytogenes by inhibiting acidification of the phagocytic vacuole of host cells which restricts bacterial translocation from the vacuole to the cytosol. Required for the antibacterial activity of reactive oxygen species and nitric oxide. Functionally, pore-forming protein that plays a central role in antigen cross-presentation in dendritic cells by mediating delivery of antigens for cross-presentation. Dendritic cells bridge innate and adaptive immunity by capturing exogenous antigens on MHC class-I molecules and presenting them to naive CD8(+) T-cells. Acts by forming a pore in antigen-containing compartments, promoting the release of antigens into the cytosol, enabling generation of MHCI:peptide complexes and T-cell priming. The protein is Macrophage-expressed gene 1 protein (MPEG1) of Pongo abelii (Sumatran orangutan).